The following is a 951-amino-acid chain: Valine--tRNA ligase (951 aa).

The 'HIGH' region motif lies at 42 to 52 (PNVTGSLHMGH). The 'KMSKS' region motif lies at 554–558 (KMSKS). Lys-557 provides a ligand contact to ATP. Residues 880 to 944 (AGLINKEDEL…AEAKAKLIEQ (65 aa)) adopt a coiled-coil conformation.

This sequence belongs to the class-I aminoacyl-tRNA synthetase family. ValS type 1 subfamily. In terms of assembly, monomer.

Its subcellular location is the cytoplasm. The enzyme catalyses tRNA(Val) + L-valine + ATP = L-valyl-tRNA(Val) + AMP + diphosphate. In terms of biological role, catalyzes the attachment of valine to tRNA(Val). As ValRS can inadvertently accommodate and process structurally similar amino acids such as threonine, to avoid such errors, it has a 'posttransfer' editing activity that hydrolyzes mischarged Thr-tRNA(Val) in a tRNA-dependent manner. The sequence is that of Valine--tRNA ligase from Shigella dysenteriae serotype 1 (strain Sd197).